A 267-amino-acid chain; its full sequence is Cytokinesis defective protein 7 (267 aa).

Residues 244–267 (RNQADQSILPPSGDQQHHRSELHA) are disordered. A compositionally biased stretch (basic and acidic residues) spans 258–267 (QQHHRSELHA).

In Caenorhabditis elegans, this protein is Cytokinesis defective protein 7.